A 263-amino-acid polypeptide reads, in one-letter code: Ribosomal RNA large subunit methyltransferase E (263 aa).

The segment at 1–34 (MSSAEGPKSGGGSKGSKSEASSRVRGSAPTGSRD) is disordered. Residues G102, W104, D126, D142, and D166 each contribute to the S-adenosyl-L-methionine site. K206 serves as the catalytic Proton acceptor.

This sequence belongs to the class I-like SAM-binding methyltransferase superfamily. RNA methyltransferase RlmE family.

Its subcellular location is the cytoplasm. The catalysed reaction is uridine(2552) in 23S rRNA + S-adenosyl-L-methionine = 2'-O-methyluridine(2552) in 23S rRNA + S-adenosyl-L-homocysteine + H(+). Its function is as follows. Specifically methylates the uridine in position 2552 of 23S rRNA at the 2'-O position of the ribose in the fully assembled 50S ribosomal subunit. The chain is Ribosomal RNA large subunit methyltransferase E from Rhodospirillum rubrum (strain ATCC 11170 / ATH 1.1.1 / DSM 467 / LMG 4362 / NCIMB 8255 / S1).